The following is a 127-amino-acid chain: Fluoride-specific ion channel FluC (127 aa).

4 helical membrane passes run 8 to 28 (LLIAFGGAIGSIFRYLLQYWF), 37 to 57 (PWGTLTANLLGSFLIGVVYAI), 68 to 88 (WKFLLASGFCGGFTTFSTFSY), and 100 to 120 (ILFLGYICLSVVGGIGFAFAG). Positions 78 and 81 each coordinate Na(+).

It belongs to the fluoride channel Fluc/FEX (TC 1.A.43) family.

It localises to the cell inner membrane. The enzyme catalyses fluoride(in) = fluoride(out). Its activity is regulated as follows. Na(+) is not transported, but it plays an essential structural role and its presence is essential for fluoride channel function. In terms of biological role, fluoride-specific ion channel. Important for reducing fluoride concentration in the cell, thus reducing its toxicity. This chain is Fluoride-specific ion channel FluC, found in Leptospira interrogans serogroup Icterohaemorrhagiae serovar copenhageni (strain Fiocruz L1-130).